Reading from the N-terminus, the 463-residue chain is Elongation factor 1-alpha 2 (463 aa).

The residue at position 2 (G2) is a N,N,N-trimethylglycine. The 238-residue stretch at 5-242 folds into the tr-type G domain; it reads KTHINIVVIG…DTILPPTRPT (238 aa). The G1 stretch occupies residues 14–21; it reads GHVDSGKS. Residues D17, S18, G19, K20, S21, and T22 each coordinate GTP. D17 lines the Mg(2+) pocket. K36 is modified (N6,N6,N6-trimethyllysine; alternate). An N6,N6-dimethyllysine; alternate modification is found at K36. K36 bears the N6-methyllysine; alternate mark. An N6,N6,N6-trimethyllysine modification is found at K55. Residue K55 is modified to N6,N6-dimethyllysine. Residues 70-74 are G2; it reads GITID. K79 is subject to N6,N6,N6-trimethyllysine. Residues 91–94 are G3; that stretch reads DAPG. Positions 153, 154, and 156 each coordinate GTP. The tract at residues 153–156 is G4; it reads NKMD. A Phosphoserine modification is found at S163. N6,N6-dimethyllysine; alternate is present on K165. K165 carries the N6-methyllysine; alternate modification. N6,N6,N6-trimethyllysine; alternate; by EEF1AKMT3 is present on K165. K179 carries the N6-acetyllysine modification. Residues S194, G195, and W196 each coordinate GTP. The segment at 194 to 196 is G5; that stretch reads SGW. S224 is modified (phosphoserine). T239 bears the Phosphothreonine mark. 2 positions are modified to 5-glutamyl glycerylphosphorylethanolamine: E301 and E374. K439 is modified (N6-acetyllysine). Residues 444–463 form a disordered region; the sequence is KSGGAGKVTKSAQKAQKAGK.

Belongs to the TRAFAC class translation factor GTPase superfamily. Classic translation factor GTPase family. EF-Tu/EF-1A subfamily. Homodimer; arranged in a 'head to tail' dimer configuration. In terms of processing, trimethylated at Lys-165 by EEF1AKMT3. Mono-, di-, and trimethylated at Lys-36 by EEF1AKMT4; trimethylated form is predominant. Methylation by EEF1AKMT4 contributes to the fine-tuning of translation rates for a subset of tRNAs. Trimethylated at the N-terminus and dimethylated at Lys-55 by METTL13.

It localises to the endoplasmic reticulum membrane. It catalyses the reaction GTP + H2O = GDP + phosphate + H(+). Functionally, translation elongation factor that catalyzes the GTP-dependent binding of aminoacyl-tRNA (aa-tRNA) to the A-site of ribosomes during the elongation phase of protein synthesis. Base pairing between the mRNA codon and the aa-tRNA anticodon promotes GTP hydrolysis, releasing the aa-tRNA from EEF1A1 and allowing its accommodation into the ribosome. The growing protein chain is subsequently transferred from the P-site peptidyl tRNA to the A-site aa-tRNA, extending it by one amino acid through ribosome-catalyzed peptide bond formation. This Rattus norvegicus (Rat) protein is Elongation factor 1-alpha 2 (Eef1a2).